Consider the following 699-residue polypeptide: Elongation factor G (699 aa).

A tr-type G domain is found at 8–283 (EQIRNIGICA…AIVDFLPSPI (276 aa)). GTP is bound by residues 17-24 (AHIDAGKT), 81-85 (DTPGH), and 135-138 (NKMD).

The protein belongs to the TRAFAC class translation factor GTPase superfamily. Classic translation factor GTPase family. EF-G/EF-2 subfamily.

It is found in the cytoplasm. In terms of biological role, catalyzes the GTP-dependent ribosomal translocation step during translation elongation. During this step, the ribosome changes from the pre-translocational (PRE) to the post-translocational (POST) state as the newly formed A-site-bound peptidyl-tRNA and P-site-bound deacylated tRNA move to the P and E sites, respectively. Catalyzes the coordinated movement of the two tRNA molecules, the mRNA and conformational changes in the ribosome. This chain is Elongation factor G (fusA), found in Rickettsia prowazekii (strain Madrid E).